The following is a 126-amino-acid chain: Aspartate 1-decarboxylase (126 aa).

S25 serves as the catalytic Schiff-base intermediate with substrate; via pyruvic acid. At S25 the chain carries Pyruvic acid (Ser). T57 is a binding site for substrate. The Proton donor role is filled by Y58. 73–75 (GAA) contacts substrate.

The protein belongs to the PanD family. Heterooctamer of four alpha and four beta subunits. Requires pyruvate as cofactor. Is synthesized initially as an inactive proenzyme, which is activated by self-cleavage at a specific serine bond to produce a beta-subunit with a hydroxyl group at its C-terminus and an alpha-subunit with a pyruvoyl group at its N-terminus.

The protein localises to the cytoplasm. The enzyme catalyses L-aspartate + H(+) = beta-alanine + CO2. Its pathway is cofactor biosynthesis; (R)-pantothenate biosynthesis; beta-alanine from L-aspartate: step 1/1. Its function is as follows. Catalyzes the pyruvoyl-dependent decarboxylation of aspartate to produce beta-alanine. The chain is Aspartate 1-decarboxylase from Erwinia tasmaniensis (strain DSM 17950 / CFBP 7177 / CIP 109463 / NCPPB 4357 / Et1/99).